The chain runs to 375 residues: Chlorophyll a/b light-harvesting protein PcbC (375 aa).

Helical transmembrane passes span 40–60, 102–122, 151–171, 225–245, 262–282, and 300–320; these read LLGA…SITV, YFVI…GGLF, LSLI…AFVA, IIGG…WHIL, AILS…GFFV, and GAAA…VWHA. The tract at residues 352–375 is disordered; that stretch reads ARTFIGRGKPQPEPPKKKGLFGRG.

The protein belongs to the PsbB/PsbC family. IsiA/Pcb subfamily. In terms of assembly, the antenna complex consists of chlorophylls (a and b) and chlorophyll a/b binding proteins. The cofactor is chlorophyll a. Chlorophyll b is required as a cofactor.

The protein resides in the cellular thylakoid membrane. Functionally, the antenna complex functions as a light receptor, it captures and delivers excitation energy to photosystems II and I. The Prochlorales pcb genes are not related to higher plant LHCs. The chain is Chlorophyll a/b light-harvesting protein PcbC (pcbC) from Prochlorothrix hollandica.